Here is a 171-residue protein sequence, read N- to C-terminus: Xanthine-guanine phosphoribosyltransferase (171 aa).

5-phospho-alpha-D-ribose 1-diphosphate-binding positions include 51–52 and 106–114; these read RG and DDLVDSGKT. Mg(2+) is bound at residue Asp-107. Positions 110 and 153 each coordinate guanine. 2 residues coordinate xanthine: Asp-110 and Ile-153. Residues 110 to 114 and 152 to 153 each bind GMP; these read DSGKT and WI.

This sequence belongs to the purine/pyrimidine phosphoribosyltransferase family. XGPT subfamily. As to quaternary structure, homotetramer. It depends on Mg(2+) as a cofactor.

The protein resides in the cell inner membrane. It catalyses the reaction GMP + diphosphate = guanine + 5-phospho-alpha-D-ribose 1-diphosphate. The enzyme catalyses XMP + diphosphate = xanthine + 5-phospho-alpha-D-ribose 1-diphosphate. The catalysed reaction is IMP + diphosphate = hypoxanthine + 5-phospho-alpha-D-ribose 1-diphosphate. It participates in purine metabolism; GMP biosynthesis via salvage pathway; GMP from guanine: step 1/1. It functions in the pathway purine metabolism; XMP biosynthesis via salvage pathway; XMP from xanthine: step 1/1. Its function is as follows. Purine salvage pathway enzyme that catalyzes the transfer of the ribosyl-5-phosphate group from 5-phospho-alpha-D-ribose 1-diphosphate (PRPP) to the N9 position of the 6-oxopurines guanine and xanthine to form the corresponding ribonucleotides GMP (guanosine 5'-monophosphate) and XMP (xanthosine 5'-monophosphate), with the release of PPi. To a lesser extent, also acts on hypoxanthine. The chain is Xanthine-guanine phosphoribosyltransferase from Ruegeria pomeroyi (strain ATCC 700808 / DSM 15171 / DSS-3) (Silicibacter pomeroyi).